Reading from the N-terminus, the 309-residue chain is Methionyl-tRNA formyltransferase (309 aa).

A (6S)-5,6,7,8-tetrahydrofolate-binding site is contributed by 107–110 (SLLP).

It belongs to the Fmt family.

It carries out the reaction L-methionyl-tRNA(fMet) + (6R)-10-formyltetrahydrofolate = N-formyl-L-methionyl-tRNA(fMet) + (6S)-5,6,7,8-tetrahydrofolate + H(+). Its function is as follows. Attaches a formyl group to the free amino group of methionyl-tRNA(fMet). The formyl group appears to play a dual role in the initiator identity of N-formylmethionyl-tRNA by promoting its recognition by IF2 and preventing the misappropriation of this tRNA by the elongation apparatus. The sequence is that of Methionyl-tRNA formyltransferase from Borrelia turicatae (strain 91E135).